We begin with the raw amino-acid sequence, 450 residues long: Asparagine--tRNA ligase (450 aa).

The protein belongs to the class-II aminoacyl-tRNA synthetase family. As to quaternary structure, homodimer.

Its subcellular location is the cytoplasm. The catalysed reaction is tRNA(Asn) + L-asparagine + ATP = L-asparaginyl-tRNA(Asn) + AMP + diphosphate + H(+). This Mycoplasmopsis pulmonis (strain UAB CTIP) (Mycoplasma pulmonis) protein is Asparagine--tRNA ligase.